The chain runs to 52 residues: Alpha-crystallin B chain (52 aa).

Belongs to the small heat shock protein (HSP20) family. In terms of assembly, homodimer. Aggregates with homologous proteins, including alpha-A-crystallin and the small heat shock protein HSPB1, to form large heteromeric complexes.

In terms of biological role, may contribute to the transparency and refractive index of the lens. The polypeptide is Alpha-crystallin B chain (CRYAB) (Eudromia elegans (Elegant crested-tinamou)).